The primary structure comprises 249 residues: Uridylate kinase (249 aa).

21–24 (KLSG) serves as a coordination point for ATP. Glycine 63 lines the UMP pocket. Residues glycine 64 and arginine 68 each contribute to the ATP site. UMP is bound by residues aspartate 84 and 145 to 152 (TGNPFVTT). 3 residues coordinate ATP: threonine 172, tyrosine 178, and aspartate 181.

Belongs to the UMP kinase family. In terms of assembly, homohexamer.

Its subcellular location is the cytoplasm. It carries out the reaction UMP + ATP = UDP + ADP. The protein operates within pyrimidine metabolism; CTP biosynthesis via de novo pathway; UDP from UMP (UMPK route): step 1/1. With respect to regulation, inhibited by UTP. Its function is as follows. Catalyzes the reversible phosphorylation of UMP to UDP. The chain is Uridylate kinase from Francisella tularensis subsp. tularensis (strain FSC 198).